Consider the following 157-residue polypeptide: Peptide methionine sulfoxide reductase MsrA (157 aa).

Residue Cys10 is part of the active site.

This sequence belongs to the MsrA Met sulfoxide reductase family.

The enzyme catalyses L-methionyl-[protein] + [thioredoxin]-disulfide + H2O = L-methionyl-(S)-S-oxide-[protein] + [thioredoxin]-dithiol. The catalysed reaction is [thioredoxin]-disulfide + L-methionine + H2O = L-methionine (S)-S-oxide + [thioredoxin]-dithiol. Has an important function as a repair enzyme for proteins that have been inactivated by oxidation. Catalyzes the reversible oxidation-reduction of methionine sulfoxide in proteins to methionine. The chain is Peptide methionine sulfoxide reductase MsrA from Clostridium perfringens (strain ATCC 13124 / DSM 756 / JCM 1290 / NCIMB 6125 / NCTC 8237 / Type A).